The sequence spans 170 residues: ATP synthase subunit b (170 aa).

Residues 15 to 37 (LNLFETNVLNWAVVVFGLYKFLP) traverse the membrane as a helical segment.

It belongs to the ATPase B chain family. As to quaternary structure, F-type ATPases have 2 components, F(1) - the catalytic core - and F(0) - the membrane proton channel. F(1) has five subunits: alpha(3), beta(3), gamma(1), delta(1), epsilon(1). F(0) has four main subunits: a(1), b(1), b'(1) and c(10-14). The alpha and beta chains form an alternating ring which encloses part of the gamma chain. F(1) is attached to F(0) by a central stalk formed by the gamma and epsilon chains, while a peripheral stalk is formed by the delta, b and b' chains.

The protein localises to the cellular thylakoid membrane. F(1)F(0) ATP synthase produces ATP from ADP in the presence of a proton or sodium gradient. F-type ATPases consist of two structural domains, F(1) containing the extramembraneous catalytic core and F(0) containing the membrane proton channel, linked together by a central stalk and a peripheral stalk. During catalysis, ATP synthesis in the catalytic domain of F(1) is coupled via a rotary mechanism of the central stalk subunits to proton translocation. In terms of biological role, component of the F(0) channel, it forms part of the peripheral stalk, linking F(1) to F(0). The chain is ATP synthase subunit b from Prochlorococcus marinus (strain MIT 9515).